The primary structure comprises 529 residues: Protein FLOURY ENDOSPERM 6, chloroplastic (529 aa).

3 disordered regions span residues 1-22 (MLPL…PTLT), 39-77 (AAPH…NAAR), and 166-275 (QGAV…HNKS). The N-terminal 71 residues, 1 to 71 (MLPLLLPLPV…QTRAPRRTLS (71 aa)), are a transit peptide targeting the chloroplast. Residues 9 to 18 (PVTPPPPLPS) show a composition bias toward pro residues. Over residues 41–57 (PHHHHHHRRRRVYRRQR) the composition is skewed to basic residues. Positions 400–452 (VMQAQEELRSIRAKIAVLEGKMALEIIEKNKIIEEKQRRLDEAEKALSELRTV) form a coiled coil.

Interacts with SKIPA. Interacts with ISA1. As to expression, expressed in leaves, stems and panicles. Expressed at lower levels in roots and developing seeds.

The protein resides in the plastid. Its subcellular location is the chloroplast. In terms of biological role, involved in compound starch granule formation and starch synthesis in endosperm. May act as a regulatory scaffolding protein and affect starch synthesis and compound starch granule formation through direct interaction with isoamylase 1 (ISA1). Binds starch, amylopectin and amylose through its C-terminal carbohydrate-binding domain (CBM) in vitro. The sequence is that of Protein FLOURY ENDOSPERM 6, chloroplastic from Oryza sativa subsp. japonica (Rice).